Reading from the N-terminus, the 566-residue chain is Developmental regulatory protein wetA (566 aa).

Disordered stretches follow at residues 116–174 (VPAV…LMRP), 232–316 (STEG…SDSL), 334–364 (AWWPSMPSRVPRQPSYQHVVSSPAPQRSIQS), 381–400 (SSFDGSTSADPSFSSVVTSA), and 429–542 (PPVQ…RRRK). Polar residues-rich tracts occupy residues 165 to 174 (QSFSPSLMRP) and 269 to 291 (AQQQQHNYLSQSNNSTMATSSPP). Over residues 298–316 (SSPHSSDPQSLSSWHSDSL) the composition is skewed to low complexity. Composition is skewed to polar residues over residues 347–364 (PSYQHVVSSPAPQRSIQS) and 381–398 (SSFDGSTSADPSFSSVVT). The span at 435 to 448 (SRSPSLSPRGRGSP) shows a compositional bias: low complexity. Residues 449-462 (TQGSPLRNEASTKT) are compositionally biased toward polar residues. Residues 463-473 (SPHRRGYHGRK) are compositionally biased toward basic residues. The segment covering 482 to 500 (PKPVKGPNSSSPGSGSNKS) has biased composition (low complexity). Positions 501–511 (LTVSFVNFTPN) are enriched in polar residues.

Belongs to the wetA family.

In terms of biological role, brlA, abaA and wetA are pivotal regulators of conidiophore development and conidium maturation. They act individually and together to regulate their own expression and that of numerous other sporulation-specific genes. Plays an essential role in the completion of conidial maturation and is essential for trehalose biogenesis in conidia. Negatively regulates expression of the melanin biosynthetic gene cluster. Also plays an a role in the early phase of fungal growth including proper hyphal branching. In Aspergillus fumigatus (strain ATCC MYA-4609 / CBS 101355 / FGSC A1100 / Af293) (Neosartorya fumigata), this protein is Developmental regulatory protein wetA.